Here is a 246-residue protein sequence, read N- to C-terminus: Small ribosomal subunit protein uS2 (246 aa).

It belongs to the universal ribosomal protein uS2 family.

The sequence is that of Small ribosomal subunit protein uS2 from Burkholderia pseudomallei (strain 668).